A 461-amino-acid polypeptide reads, in one-letter code: Phosphoenolpyruvate carboxylase (461 aa).

The protein belongs to the PEPCase type 2 family. Homotetramer. The cofactor is Mg(2+).

The catalysed reaction is oxaloacetate + phosphate = phosphoenolpyruvate + hydrogencarbonate. Functionally, catalyzes the irreversible beta-carboxylation of phosphoenolpyruvate (PEP) to form oxaloacetate (OAA), a four-carbon dicarboxylic acid source for the tricarboxylic acid cycle. This is Phosphoenolpyruvate carboxylase from Pyrobaculum islandicum (strain DSM 4184 / JCM 9189 / GEO3).